The primary structure comprises 417 residues: MLKKDMNIADYDPELFNAIQNETLRQEEHIELIASENYTSPRVMQAQGSQLTNKYAEGYPGKRYYGGCEYVDVVETLAIERAKQLFGATYANVQPHSGSQANSAVYMALLKPGDTVLGMNLAHGGHLTHGSPVNFSGRLYNIIPYGIDESGKIDYDEMERLAVEHKPKMMIGGFSAYSGIVDWARMREIADKIGAYLFVDMAHVAGLIAAGVYPNPVPHAHVVTSTTHKTLAGPRGGIILSAADDEELYKKLNSAVFPGGQGGPLMHVIAGKAVAFKEALEPEFKTYQQQVVNNAKAMVEVFLERGYKIVSGGTSNHLMLVDLIGRDLTGKEADAALGSANITVNKNSVPNDPRSPFVTSGVRIGTPAITRRGFKEAEAKQLTGWICDILDDAHNPAVIERVKGQVLALCARFPVYG.

Residues L121 and 125-127 contribute to the (6S)-5,6,7,8-tetrahydrofolate site; that span reads GHL. At K229 the chain carries N6-(pyridoxal phosphate)lysine. 355 to 357 contacts (6S)-5,6,7,8-tetrahydrofolate; that stretch reads SPF.

This sequence belongs to the SHMT family. Homodimer. The cofactor is pyridoxal 5'-phosphate.

It is found in the cytoplasm. It catalyses the reaction (6R)-5,10-methylene-5,6,7,8-tetrahydrofolate + glycine + H2O = (6S)-5,6,7,8-tetrahydrofolate + L-serine. The protein operates within one-carbon metabolism; tetrahydrofolate interconversion. It participates in amino-acid biosynthesis; glycine biosynthesis; glycine from L-serine: step 1/1. Functionally, catalyzes the reversible interconversion of serine and glycine with tetrahydrofolate (THF) serving as the one-carbon carrier. This reaction serves as the major source of one-carbon groups required for the biosynthesis of purines, thymidylate, methionine, and other important biomolecules. Also exhibits THF-independent aldolase activity toward beta-hydroxyamino acids, producing glycine and aldehydes, via a retro-aldol mechanism. The polypeptide is Serine hydroxymethyltransferase (Shewanella oneidensis (strain ATCC 700550 / JCM 31522 / CIP 106686 / LMG 19005 / NCIMB 14063 / MR-1)).